Reading from the N-terminus, the 484-residue chain is Acetaldehyde dehydrogenase (acetylating) (484 aa).

It belongs to the aldehyde dehydrogenase family.

It carries out the reaction acetaldehyde + NAD(+) + CoA = acetyl-CoA + NADH + H(+). It functions in the pathway organosulfur degradation; alkanesulfonate degradation. Its function is as follows. Involved in an anaerobic respiration pathway that converts the sulfonate taurine (2-aminoethanesulfonate) to ammonia, acetate and sulfide. Catalyzes the oxidation of acetaldehyde to acetyl-CoA in the presence of CoASH and NAD(+). Highly prefers NAD(+) over NADP(+). In Bilophila wadsworthia (strain 3_1_6), this protein is Acetaldehyde dehydrogenase (acetylating).